The following is a 489-amino-acid chain: Cytochrome P450 2C70 (489 aa).

Positions 1–27 (MALFIFLGIWLSCFLFLFLWNQHRGRG) are cleaved as a signal peptide. C434 serves as a coordination point for heme.

The protein belongs to the cytochrome P450 family. The cofactor is heme. Expressed in liver.

Its subcellular location is the endoplasmic reticulum membrane. The protein resides in the microsome membrane. It carries out the reaction chenodeoxycholate + reduced [NADPH--hemoprotein reductase] + O2 = alpha-muricholate + oxidized [NADPH--hemoprotein reductase] + H2O + H(+). The enzyme catalyses ursodeoxycholate + reduced [NADPH--hemoprotein reductase] + O2 = beta-muricholate + oxidized [NADPH--hemoprotein reductase] + H2O + H(+). In terms of biological role, a cytochrome P450 monooxygenase involved in muricholic acid (MCA) synthesis. Hydroxylates at the 6-beta position two major bile acids, chenodeoxycholic acid (CDCA) and ursodeoxycholic acid (UDCA) to form alpha-MCA and beta-MCA, respectively. May regulate NR1H4/farnesoid X receptor signaling, as taurine-conjugated MCAs are antagonists of NR1H4. Mechanistically, uses molecular oxygen inserting one oxygen atom into a substrate, and reducing the second into a water molecule, with two electrons provided by NADPH via cytochrome P450 reductase (CPR; NADPH-ferrihemoprotein reductase). The polypeptide is Cytochrome P450 2C70 (Mus musculus (Mouse)).